The chain runs to 160 residues: 2-C-methyl-D-erythritol 2,4-cyclodiphosphate synthase (160 aa).

2 residues coordinate a divalent metal cation: Asp-8 and His-10. Residues 8 to 10 (DVH) and 34 to 35 (HS) each bind 4-CDP-2-C-methyl-D-erythritol 2-phosphate. An a divalent metal cation-binding site is contributed by His-42. 4-CDP-2-C-methyl-D-erythritol 2-phosphate is bound by residues 56–58 (DIG), 61–65 (FPDTD), 100–106 (AQAPKML), 132–135 (TTTE), Phe-139, and Arg-142.

This sequence belongs to the IspF family. Homotrimer. It depends on a divalent metal cation as a cofactor.

The catalysed reaction is 4-CDP-2-C-methyl-D-erythritol 2-phosphate = 2-C-methyl-D-erythritol 2,4-cyclic diphosphate + CMP. It participates in isoprenoid biosynthesis; isopentenyl diphosphate biosynthesis via DXP pathway; isopentenyl diphosphate from 1-deoxy-D-xylulose 5-phosphate: step 4/6. Its function is as follows. Involved in the biosynthesis of isopentenyl diphosphate (IPP) and dimethylallyl diphosphate (DMAPP), two major building blocks of isoprenoid compounds. Catalyzes the conversion of 4-diphosphocytidyl-2-C-methyl-D-erythritol 2-phosphate (CDP-ME2P) to 2-C-methyl-D-erythritol 2,4-cyclodiphosphate (ME-CPP) with a corresponding release of cytidine 5-monophosphate (CMP). The protein is 2-C-methyl-D-erythritol 2,4-cyclodiphosphate synthase of Proteus mirabilis (strain HI4320).